The sequence spans 447 residues: Keratin, type I cytoskeletal 15 (447 aa).

The segment at 1–93 is head; the sequence is MATTFLQTSS…GGDGGLLSGN (93 aa). Ser-16, Ser-28, Ser-33, and Ser-47 each carry phosphoserine. Positions 94 to 129 are coil 1A; the sequence is EKVTMQNLNDRLASYLDKVRALEEANTELEVKIRDW. Residues 94 to 406 form the IF rod domain; sequence EKVTMQNLND…NLLEGQDAKM (313 aa). Thr-120 is modified (phosphothreonine). A linker 1 region spans residues 130-148; sequence YQKQSPASPDRDYSHYFKT. The interval 149–240 is coil 1B; it reads MEEIRDKILA…KNHEEEMKEF (92 aa). The linker 12 stretch occupies residues 241–260; that stretch reads SSQLAGQVNVEMDAAPGVDL. Positions 261–402 are coil 2; sequence TRMLAEMREQ…STYRNLLEGQ (142 aa). Lys-289 participates in a covalent cross-link: Glycyl lysine isopeptide (Lys-Gly) (interchain with G-Cter in SUMO2). Thr-290 and Thr-312 each carry phosphothreonine. Residues 403–447 form a tail region; the sequence is DAKMAAIGVREASLRGGSSGGGSNFHISVEESVDGKVVSSRKRES. A Glycyl lysine isopeptide (Lys-Gly) (interchain with G-Cter in SUMO1); alternate cross-link involves residue Lys-438. A Glycyl lysine isopeptide (Lys-Gly) (interchain with G-Cter in SUMO2); alternate cross-link involves residue Lys-438.

This sequence belongs to the intermediate filament family. In terms of assembly, heterotetramer of two type I and two type II keratins. Forms a heterodimer with KRT14. Interacts with NOD2.

The chain is Keratin, type I cytoskeletal 15 from Rattus norvegicus (Rat).